A 204-amino-acid polypeptide reads, in one-letter code: High frequency lysogenization protein HflD homolog (204 aa).

This sequence belongs to the HflD family.

Its subcellular location is the cytoplasm. It localises to the cell inner membrane. This chain is High frequency lysogenization protein HflD homolog, found in Xanthomonas euvesicatoria pv. vesicatoria (strain 85-10) (Xanthomonas campestris pv. vesicatoria).